Here is a 433-residue protein sequence, read N- to C-terminus: Homoserine dehydrogenase (433 aa).

Residues threonine 12, valine 13, and lysine 102 each coordinate NADPH. Residue valine 13 coordinates NAD(+). NADP(+)-binding residues include valine 13 and lysine 102. Glutamate 126, valine 129, glycine 131, and isoleucine 133 together coordinate Na(+). Residues glycine 184 and glutamate 187 each contribute to the NADP(+) site. Residues glutamate 187 and aspartate 198 each contribute to the L-homoserine site. The Proton donor role is filled by lysine 202. Glycine 303 is a binding site for NADPH. Position 303 (glycine 303) interacts with NAD(+). Glycine 303 is a binding site for NADP(+). In terms of domain architecture, ACT spans tyrosine 356–serine 433.

This sequence belongs to the homoserine dehydrogenase family. The cofactor is a metal cation.

It catalyses the reaction L-homoserine + NADP(+) = L-aspartate 4-semialdehyde + NADPH + H(+). The catalysed reaction is L-homoserine + NAD(+) = L-aspartate 4-semialdehyde + NADH + H(+). It functions in the pathway amino-acid biosynthesis; L-methionine biosynthesis via de novo pathway; L-homoserine from L-aspartate: step 3/3. It participates in amino-acid biosynthesis; L-threonine biosynthesis; L-threonine from L-aspartate: step 3/5. Catalyzes the conversion of L-aspartate-beta-semialdehyde (L-Asa) to L-homoserine (L-Hse), the third step in the biosynthesis of threonine and methionine from aspartate. The chain is Homoserine dehydrogenase (hom) from Synechocystis sp. (strain ATCC 27184 / PCC 6803 / Kazusa).